The following is a 99-amino-acid chain: CLAVATA3/ESR (CLE)-related protein 17 (99 aa).

An N-terminal signal peptide occupies residues 1–21; it reads MTHVLVRRQGQGKKRRWDVNM. Residues 77–89 show a composition bias toward basic and acidic residues; it reads LSRDDIYGDDKRV. The disordered stretch occupies residues 77-99; the sequence is LSRDDIYGDDKRVVHTGPNPLHN. The residue at position 94 (P94) is a Hydroxyproline. P94 is a glycosylation site (O-linked (Ara...) hydroxyproline).

Belongs to the CLV3/ESR signal peptide family. The O-glycosylation (arabinosylation) of the hydroxyproline Pro-94 enhances binding affinity of the CLE17p peptide for its receptor. As to expression, mostly expressed in seedlings, roots, flowers, stems and apex, and, to a lower extent, in leaves and siliques.

The protein localises to the secreted. It is found in the extracellular space. Its function is as follows. Extracellular signal peptide that regulates cell fate. Represses root apical meristem maintenance. Regulates the transition of protophloem cells from proliferation to differentiation, thus impinging on postembryonic growth capacity of the root meristem; this signaling pathway requires CRN and CLV2. The polypeptide is CLAVATA3/ESR (CLE)-related protein 17 (Arabidopsis thaliana (Mouse-ear cress)).